The sequence spans 681 residues: Envelope glycoprotein (681 aa).

The N-terminal stretch at 1 to 18 (MKTIYFLISLILIQSIKT) is a signal peptide. Over 19–648 (LPVLEIASNS…GLGGKWWTSD (630 aa)) the chain is Extracellular. A receptor-binding region spans residues 38–188 (SGTLQKTEDV…FSRQGQGYRH (151 aa)). N94, N171, N190, N202, N207, N219, and N223 each carry an N-linked (GlcNAc...) asparagine; by host glycan. Residues 223–428 (NQTCPPSLKP…PDSSPTTRPP (206 aa)) form a disordered region. Composition is skewed to polar residues over residues 236–260 (PTVTPSIHSTNTQINTAKSGTMNPS) and 278–315 (PHTTLNVVTEQKQSSTILSTPSLHPSTSQHEQNSTNPS). Residues 277–455 (GPHTTLNVVT…PFLDGLINTE (179 aa)) form a mucin-like region region. 10 N-linked (GlcNAc...) asparagine; by host glycosylation sites follow: N310, N323, N336, N350, N360, N364, N381, N397, N475, and N487. A compositionally biased stretch (low complexity) spans 327-347 (PTTQPATLLNNTNTTPTYNTL). Polar residues-rich tracts occupy residues 348–365 (KYNLSTPSPPTRNITNND) and 373–394 (SEQTNAQLNTTLDPTENPTTGQ). Over residues 395–428 (DTNSTTNIIMTTSDITSKHPTNSSPDSSPTTRPP) the composition is skewed to low complexity. The interval 529–549 (GLSWIPFFGPGIEGLYTAGLI) is fusion peptide. N-linked (GlcNAc...) asparagine; by host glycans are attached at residues N564 and N619. The chain crosses the membrane as a helical span at residues 649-669 (WGVLTNLGILLLLSIAVLIAL). The Cytoplasmic segment spans residues 670 to 681 (SCICRIFTKYIG). Residues C671 and C673 are each lipidated (S-palmitoyl cysteine; by host).

This sequence belongs to the filoviruses glycoprotein family. As to quaternary structure, homotrimer; each monomer consists of a GP1 and a GP2 subunit linked by disulfide bonds. The resulting peplomers (GP1,2) protrude from the virus surface as spikes. GP1,2 interacts with human CD209 and CLEC4M (collectively referred to as DC-SIGN(R)). Asialoglycoprotein receptor (ASGP-R) may be a liver-specific receptor for GP1,2. Members of the Tyro3 receptor tyrosine kinase family may be cell entry factors interacting with GP1,2. In terms of processing, N-glycosylated. Post-translationally, O-glycosylated in the mucin-like region. Specific enzymatic cleavages in vivo yield mature proteins. The precursor is processed into GP1 and GP2 by host cell furin in the trans Golgi, and maybe by other host proteases, to yield the mature GP1 and GP2 proteins. The cleavage site corresponds to the furin optimal cleavage sequence [KR]-X-[KR]-R. In terms of processing, GP1 is phosphorylated on serine residues between residues 260 and 273.

Its subcellular location is the virion membrane. The protein localises to the host cell membrane. GP1 is responsible for binding to the receptor(s) on target cells. Interacts with CD209/DC-SIGN and CLEC4M/DC-SIGNR which act as cofactors for virus entry into the host cell. Binding to CD209 and CLEC4M, which are respectively found on dendritic cells (DCs), and on endothelial cells of liver sinusoids and lymph node sinuses, facilitate infection of macrophages and endothelial cells. These interactions not only facilitate virus cell entry, but also allow capture of viral particles by DCs and subsequent transmission to susceptible cells without DCs infection (trans infection). In terms of biological role, GP2 acts as a class I viral fusion protein. Under the current model, the protein has at least 3 conformational states: pre-fusion native state, pre-hairpin intermediate state, and post-fusion hairpin state. During viral and target cell membrane fusion, the coiled coil regions (heptad repeats) assume a trimer-of-hairpins structure, positioning the fusion peptide in close proximity to the C-terminal region of the ectodomain. The formation of this structure appears to drive apposition and subsequent fusion of viral and target cell membranes. Responsible for penetration of the virus into the cell cytoplasm by mediating the fusion of the membrane of the endocytosed virus particle with the endosomal membrane. Low pH in endosomes induces an irreversible conformational change in GP2, releasing the fusion hydrophobic peptide. The protein is Envelope glycoprotein (GP) of Chlorocebus aethiops (Green monkey).